A 221-amino-acid polypeptide reads, in one-letter code: Leucyl/phenylalanyl-tRNA--protein transferase (221 aa).

This sequence belongs to the L/F-transferase family.

The protein localises to the cytoplasm. It catalyses the reaction N-terminal L-lysyl-[protein] + L-leucyl-tRNA(Leu) = N-terminal L-leucyl-L-lysyl-[protein] + tRNA(Leu) + H(+). The enzyme catalyses N-terminal L-arginyl-[protein] + L-leucyl-tRNA(Leu) = N-terminal L-leucyl-L-arginyl-[protein] + tRNA(Leu) + H(+). The catalysed reaction is L-phenylalanyl-tRNA(Phe) + an N-terminal L-alpha-aminoacyl-[protein] = an N-terminal L-phenylalanyl-L-alpha-aminoacyl-[protein] + tRNA(Phe). Its function is as follows. Functions in the N-end rule pathway of protein degradation where it conjugates Leu, Phe and, less efficiently, Met from aminoacyl-tRNAs to the N-termini of proteins containing an N-terminal arginine or lysine. This is Leucyl/phenylalanyl-tRNA--protein transferase from Phenylobacterium zucineum (strain HLK1).